Reading from the N-terminus, the 917-residue chain is Isoleucine--tRNA ligase (917 aa).

The short motif at P57–H67 is the 'HIGH' region element. Residue E554 participates in L-isoleucyl-5'-AMP binding. The short motif at K595–S599 is the 'KMSKS' region element. Residue K598 coordinates ATP. Zn(2+) contacts are provided by C886, C889, C906, and C909.

It belongs to the class-I aminoacyl-tRNA synthetase family. IleS type 1 subfamily. Monomer. Requires Zn(2+) as cofactor.

Its subcellular location is the cytoplasm. The enzyme catalyses tRNA(Ile) + L-isoleucine + ATP = L-isoleucyl-tRNA(Ile) + AMP + diphosphate. Catalyzes the attachment of isoleucine to tRNA(Ile). As IleRS can inadvertently accommodate and process structurally similar amino acids such as valine, to avoid such errors it has two additional distinct tRNA(Ile)-dependent editing activities. One activity is designated as 'pretransfer' editing and involves the hydrolysis of activated Val-AMP. The other activity is designated 'posttransfer' editing and involves deacylation of mischarged Val-tRNA(Ile). The sequence is that of Isoleucine--tRNA ligase (ileS) from Staphylococcus aureus (strain MSSA476).